We begin with the raw amino-acid sequence, 664 residues long: uncharacterized protein (664 aa).

Residues 1–25 (MSWKRYLKWVSFAIIPLLFANTSIK) form the signal peptide. A helical transmembrane segment spans residues 625-645 (IIVYLIIGFSVLVLFITVFIY).

This sequence belongs to the MG414/MG415 family.

Its subcellular location is the cell membrane. This is an uncharacterized protein from Mycoplasma genitalium (strain ATCC 33530 / DSM 19775 / NCTC 10195 / G37) (Mycoplasmoides genitalium).